Reading from the N-terminus, the 222-residue chain is Deoxyribose-phosphate aldolase (222 aa).

The Proton donor/acceptor role is filled by aspartate 94. Lysine 156 serves as the catalytic Schiff-base intermediate with acetaldehyde. The active-site Proton donor/acceptor is lysine 185.

Belongs to the DeoC/FbaB aldolase family. DeoC type 1 subfamily.

It localises to the cytoplasm. The catalysed reaction is 2-deoxy-D-ribose 5-phosphate = D-glyceraldehyde 3-phosphate + acetaldehyde. It participates in carbohydrate degradation; 2-deoxy-D-ribose 1-phosphate degradation; D-glyceraldehyde 3-phosphate and acetaldehyde from 2-deoxy-alpha-D-ribose 1-phosphate: step 2/2. Functionally, catalyzes a reversible aldol reaction between acetaldehyde and D-glyceraldehyde 3-phosphate to generate 2-deoxy-D-ribose 5-phosphate. This is Deoxyribose-phosphate aldolase from Malacoplasma penetrans (strain HF-2) (Mycoplasma penetrans).